The sequence spans 338 residues: MSIKVGINGFGRIGRILLSNALEKPELSVVAVNDPFIEPTYAAYMLKYDSSHGLFKGDIEVDGQNLVVNGKPIRFYSERDPANIKWSETGAEYIVESTGVFTTIDKAKAHLNGGAKKVIISAPSADAPMFVMGVNHKDYDGTPTVLSNASCTTNGLAPLVKIVNDNFGIVEGLMTTVHSYTATQKTVDGPSGKDWRGGRGAAQNIIPSSTGAAKAVGKVIPAMNGKITGMSFRVPSANVSVIDLTVRLEKAASYEEITSAIKKAADGELKGIMAYTSDEVVSTDMLGNNNSSIFDIKAGISLNPNFVKLVSWYDNEWGYSRRVLDLLEHVAKVDASKK.

NAD(+) is bound by residues arginine 12–isoleucine 13, aspartate 34, and arginine 79. Residues serine 150 to threonine 152, threonine 181, threonine 210 to glycine 211, and arginine 233 contribute to the D-glyceraldehyde 3-phosphate site. Cysteine 151 acts as the Nucleophile in catalysis. Asparagine 315 is an NAD(+) binding site.

The protein belongs to the glyceraldehyde-3-phosphate dehydrogenase family. As to quaternary structure, homotetramer.

It is found in the cytoplasm. The enzyme catalyses D-glyceraldehyde 3-phosphate + phosphate + NAD(+) = (2R)-3-phospho-glyceroyl phosphate + NADH + H(+). Its pathway is carbohydrate degradation; glycolysis; pyruvate from D-glyceraldehyde 3-phosphate: step 1/5. In Hypocrea atroviridis (Trichoderma atroviride), this protein is Glyceraldehyde-3-phosphate dehydrogenase (gpd1).